The chain runs to 863 residues: Leucine--tRNA ligase (863 aa).

A 'HIGH' region motif is present at residues 42-52 (PYPSGRLHMGH). Positions 622–626 (KMSKS) match the 'KMSKS' region motif. Lys625 provides a ligand contact to ATP.

The protein belongs to the class-I aminoacyl-tRNA synthetase family.

The protein localises to the cytoplasm. It catalyses the reaction tRNA(Leu) + L-leucine + ATP = L-leucyl-tRNA(Leu) + AMP + diphosphate. The protein is Leucine--tRNA ligase of Shewanella sediminis (strain HAW-EB3).